A 508-amino-acid polypeptide reads, in one-letter code: Steroid 17-alpha-hydroxylase/17,20 lyase (508 aa).

Asn202 contacts substrate. Position 442 (Cys442) interacts with heme.

It belongs to the cytochrome P450 family. Heme is required as a cofactor.

The protein localises to the endoplasmic reticulum membrane. Its subcellular location is the microsome membrane. The enzyme catalyses a C21-steroid + reduced [NADPH--hemoprotein reductase] + O2 = a 17alpha-hydroxy-C21-steroid + oxidized [NADPH--hemoprotein reductase] + H2O + H(+). It catalyses the reaction progesterone + reduced [NADPH--hemoprotein reductase] + O2 = 17alpha-hydroxyprogesterone + oxidized [NADPH--hemoprotein reductase] + H2O + H(+). The catalysed reaction is pregnenolone + reduced [NADPH--hemoprotein reductase] + O2 = 17alpha-hydroxypregnenolone + oxidized [NADPH--hemoprotein reductase] + H2O + H(+). It carries out the reaction 17alpha-hydroxyprogesterone + reduced [NADPH--hemoprotein reductase] + O2 = androst-4-ene-3,17-dione + acetate + oxidized [NADPH--hemoprotein reductase] + H2O + 2 H(+). The enzyme catalyses 17alpha-hydroxyprogesterone + reduced [NADPH--hemoprotein reductase] + O2 = 16alpha,17alpha-dihydroxyprogesterone + oxidized [NADPH--hemoprotein reductase] + H2O + H(+). It catalyses the reaction 16alpha,17alpha-dihydroxyprogesterone + reduced [NADPH--hemoprotein reductase] + O2 = 6beta,16alpha,17alpha-trihydroxyprogesterone + oxidized [NADPH--hemoprotein reductase] + H2O + H(+). The catalysed reaction is 17alpha-hydroxypregnenolone + reduced [NADPH--hemoprotein reductase] + O2 = 3beta-hydroxyandrost-5-en-17-one + acetate + oxidized [NADPH--hemoprotein reductase] + H2O + 2 H(+). It carries out the reaction 16alpha,17alpha-dihydroxypregnenolone + reduced [NADPH--hemoprotein reductase] + O2 = 3beta,16alpha-dihydroxy-androst-5-en-17-one + acetate + oxidized [NADPH--hemoprotein reductase] + H2O + 2 H(+). The enzyme catalyses 3beta-hydroxyandrost-5-en-17-one + reduced [NADPH--hemoprotein reductase] + O2 = 3beta,16alpha-dihydroxy-androst-5-en-17-one + oxidized [NADPH--hemoprotein reductase] + H2O + H(+). It catalyses the reaction androst-4-ene-3,17-dione + reduced [NADPH--hemoprotein reductase] + O2 = 16alpha-hydroxyandrost-4-ene-3,17-dione + oxidized [NADPH--hemoprotein reductase] + H2O + H(+). It participates in steroid hormone biosynthesis. The protein operates within steroid biosynthesis; glucocorticoid biosynthesis. With respect to regulation, regulated predominantly by intracellular cAMP levels. The 17,20-lyase activity is stimulated by cytochrome b5, which acts as an allosteric effector increasing the Vmax of the lyase activity. Functionally, a cytochrome P450 monooxygenase involved in corticoid and androgen biosynthesis. Catalyzes 17-alpha hydroxylation of C21 steroids, which is common for both pathways. A second oxidative step, required only for androgen synthesis, involves an acyl-carbon cleavage. The 17-alpha hydroxy intermediates, as part of adrenal glucocorticoids biosynthesis pathway, are precursors of cortisol. Hydroxylates steroid hormones, pregnenolone and progesterone to form 17-alpha hydroxy metabolites, followed by the cleavage of the C17-C20 bond to form C19 steroids, dehydroepiandrosterone (DHEA) and androstenedione. Has 16-alpha hydroxylase activity. Catalyzes 16-alpha hydroxylation of 17-alpha hydroxy pregnenolone, followed by the cleavage of the C17-C20 bond to form 16-alpha-hydroxy DHEA. Also 16-alpha hydroxylates androgens, relevant for estriol synthesis. Mechanistically, uses molecular oxygen inserting one oxygen atom into a substrate, and reducing the second into a water molecule, with two electrons provided by NADPH via cytochrome P450 reductase (CPR; NADPH-ferrihemoprotein reductase). The sequence is that of Steroid 17-alpha-hydroxylase/17,20 lyase (CYP17A1) from Felis catus (Cat).